The chain runs to 142 residues: Myosin-2 essential light chain (142 aa).

EF-hand domains lie at Asp-2–Asn-37 and His-75–Arg-110.

Myosin is a hexamer of 2 heavy chains and 4 light chains (two regulatory light chains and two essential light chains).

Its subcellular location is the cytoplasm. It localises to the cytoskeleton. In terms of biological role, required for cytokinesis and embryo elongation. May regulate myosin II complex formation and/or the association of myosin with actin. May be involved in the organization of mlc-4 and nmy-2 into bundles. This chain is Myosin-2 essential light chain, found in Caenorhabditis elegans.